The chain runs to 338 residues: Solute carrier family 35 member G3 (338 aa).

Positions Met-1–Ser-24 are disordered. The next 9 membrane-spanning stretches (helical) occupy residues Thr-37–Leu-57, Leu-67–Leu-87, Phe-105–Val-125, Cys-160–Leu-180, Thr-185–Leu-205, Thr-221–Leu-241, Leu-250–Val-270, Leu-281–Leu-301, and Val-305–Ala-325. The 126-residue stretch at Leu-49–Gly-174 folds into the EamA 1 domain. Residues Tyr-272 to Ala-325 enclose the EamA 2 domain.

Belongs to the SLC35G solute transporter family. In terms of tissue distribution, expressed in testis.

The protein resides in the membrane. The protein is Solute carrier family 35 member G3 (SLC35G3) of Homo sapiens (Human).